Reading from the N-terminus, the 485-residue chain is Proline betaine:corrinoid methyltransferase (485 aa).

It belongs to the trimethylamine methyltransferase family. The proline betaine:THF methyl transfer system is composed of two methyltransferases, MtpB and MtqA, and the corrinoid protein MtqC.

It carries out the reaction Co(I)-[quaternary-amine-specific corrinoid protein] + L-proline betaine + H(+) = methyl-Co(III)-[quaternary-amine-specific corrinoid protein] + N-methyl-L-proline. Functionally, involved in the degradation of the quaternary amine L-proline betaine. Component of a corrinoid-dependent methyltransferase system that transfers a methyl group from L-proline betaine to tetrahydrofolate (THF), forming methyl-THF, a key intermediate in the Wood-Ljungdahl acetogenesis pathway. MtpB catalyzes the methylation of the corrinoid protein MtqC, using L-proline betaine as the methyl donor. Shows weak activity with some other quaternary amines, including carnitine, phosphocholine, glycine betaine or betonicine, but cannot methylate free cob(I)alamin. The chain is Proline betaine:corrinoid methyltransferase from Eubacterium limosum.